Consider the following 356-residue polypeptide: Cyanide hydratase (356 aa).

The region spanning 8–287 (YKAAAVNAEP…EGLLFVDIDL (280 aa)) is the CN hydrolase domain. The active-site Proton acceptor is Glu-48. Lys-130 is a catalytic residue. Cys-165 serves as the catalytic Nucleophile.

It belongs to the carbon-nitrogen hydrolase superfamily. Nitrilase family. As to quaternary structure, oligomer of dimers, forming left-handed helical fibers.

The enzyme catalyses formamide = hydrogen cyanide + H2O. Functionally, catalyzes the hydration of cyanide to formamide. Degradation of cyanide may be important for plant pathogenic fungi in infection of cyanogenic plants. Can also transform some nitriles like 2-cyanopyridine and fumaronitrile. The sequence is that of Cyanide hydratase from Aspergillus niger.